The chain runs to 233 residues: Phosphoribosylformylglycinamidine synthase subunit PurQ (233 aa).

A Glutamine amidotransferase type-1 domain is found at 3–233; sequence SAVLVFPGIN…GLAQHLAKAA (231 aa). Residue Cys-87 is the Nucleophile of the active site. Residues His-204 and Glu-206 contribute to the active site.

Part of the FGAM synthase complex composed of 1 PurL, 1 PurQ and 2 PurS subunits.

The protein resides in the cytoplasm. It carries out the reaction N(2)-formyl-N(1)-(5-phospho-beta-D-ribosyl)glycinamide + L-glutamine + ATP + H2O = 2-formamido-N(1)-(5-O-phospho-beta-D-ribosyl)acetamidine + L-glutamate + ADP + phosphate + H(+). The catalysed reaction is L-glutamine + H2O = L-glutamate + NH4(+). It participates in purine metabolism; IMP biosynthesis via de novo pathway; 5-amino-1-(5-phospho-D-ribosyl)imidazole from N(2)-formyl-N(1)-(5-phospho-D-ribosyl)glycinamide: step 1/2. In terms of biological role, part of the phosphoribosylformylglycinamidine synthase complex involved in the purines biosynthetic pathway. Catalyzes the ATP-dependent conversion of formylglycinamide ribonucleotide (FGAR) and glutamine to yield formylglycinamidine ribonucleotide (FGAM) and glutamate. The FGAM synthase complex is composed of three subunits. PurQ produces an ammonia molecule by converting glutamine to glutamate. PurL transfers the ammonia molecule to FGAR to form FGAM in an ATP-dependent manner. PurS interacts with PurQ and PurL and is thought to assist in the transfer of the ammonia molecule from PurQ to PurL. This Rhodopseudomonas palustris (strain ATCC BAA-98 / CGA009) protein is Phosphoribosylformylglycinamidine synthase subunit PurQ.